Here is a 385-residue protein sequence, read N- to C-terminus: MAKHLFTSESVSEGHPDKIADQISDAVLDAILAQDPKARVACETYVKTGMVLVGGEITTSAWVDIEELTRSTIREIGYIHSDMGFDANSCAVLSAIGKQSPDINQGVDRTDPLEQGAGDQGMMFGYATNETDVLMPAPITYAHRLVARQSQVRKNGTLPWLRPDAKSQVTFAYDNGKVVGIDAVVLSTQHAEDIALPQLKEAVMEEIIKPVLPAEWLSAQTKYFINPTGRFVIGGPMGDCGLTGRKIIVDTYGGMARHGGGAFSGKDPSKVDRSAAYAARYVAKNIVAAGLAERCEIQVSYAIGVAEPTSITIETFGTEKIPADNLTALVREFFDLRPHGLITMLDLLQPIYRETAAYGHFGREHFPWEKTDKAELLLRDAAGLK.

Histidine 15 provides a ligand contact to ATP. Residue aspartate 17 participates in Mg(2+) binding. Glutamate 43 is a binding site for K(+). L-methionine is bound by residues glutamate 56 and glutamine 99. The tract at residues 99–109 (QSPDINQGVDR) is flexible loop. ATP contacts are provided by residues 164–166 (DAK), 230–231 (RF), aspartate 239, 245–246 (RK), alanine 262, and lysine 266. Residue aspartate 239 coordinates L-methionine. Residue lysine 270 participates in L-methionine binding.

It belongs to the AdoMet synthase family. In terms of assembly, homotetramer; dimer of dimers. Mg(2+) serves as cofactor. Requires K(+) as cofactor.

It localises to the cytoplasm. It catalyses the reaction L-methionine + ATP + H2O = S-adenosyl-L-methionine + phosphate + diphosphate. The protein operates within amino-acid biosynthesis; S-adenosyl-L-methionine biosynthesis; S-adenosyl-L-methionine from L-methionine: step 1/1. Catalyzes the formation of S-adenosylmethionine (AdoMet) from methionine and ATP. The overall synthetic reaction is composed of two sequential steps, AdoMet formation and the subsequent tripolyphosphate hydrolysis which occurs prior to release of AdoMet from the enzyme. The chain is S-adenosylmethionine synthase from Sodalis glossinidius (strain morsitans).